The following is a 196-amino-acid chain: MADGQLPFPCSYPSRLRRDPFRDSPLSSRLLDDGFGMDPFPDDLTAPWPEWALPRLSSAWPGTLRSGMVPRGPTATARFGVPAEGRNPPPFPGEPWKVCVNVHSFKPEELMVKTKDGYVEVSGKHEEKQQEGGIVSKNFTKKIQLPAEVDPVTVFASLSPEGLLIIEAPQVPPYSPFGESSFNNELPQDNQEVTCS.

Residues 1-28 (MADGQLPFPCSYPSRLRRDPFRDSPLSS) form a disordered region. A phosphoserine mark is found at Ser-24 and Ser-57. Phosphothreonine is present on Thr-63. 2 positions are modified to asymmetric dimethylarginine: Arg-71 and Arg-78. Residues 74–185 (TATARFGVPA…PFGESSFNNE (112 aa)) form the sHSP domain. The segment at 176–196 (PFGESSFNNELPQDNQEVTCS) is disordered. Residues 178-196 (GESSFNNELPQDNQEVTCS) are compositionally biased toward polar residues.

It belongs to the small heat shock protein (HSP20) family. As to quaternary structure, monomer. Forms a ternary complex with BAG3 and HSPA1A. Component of the chaperone-assisted selective autophagy (CASA) complex consisting of BAG3, HSPA8/HSC70, HSPB8 and STUB1/CHIP. Interacts with HSPB1. Interacts with DNAJB6. Interacts with BAG3. In terms of processing, phosphorylated.

It localises to the cytoplasm. The protein localises to the nucleus. Its function is as follows. Involved in the chaperone-assisted selective autophagy (CASA), a crucial process for protein quality control, particularly in mechanical strained cells and tissues such as muscle. Displays temperature-dependent chaperone activity. This is Heat shock protein beta-8 (Hspb8) from Rattus norvegicus (Rat).